The chain runs to 647 residues: Acetyl-coenzyme A synthetase (647 aa).

Residues Arg-189–Lys-192, Thr-307, and Asn-331 each bind CoA. Residues Gly-383–Pro-385, Asp-407–Thr-412, Asp-496, and Arg-511 each bind ATP. Ser-519 contacts CoA. Arg-522 provides a ligand contact to ATP. Residues His-535 and Val-538 each coordinate Mg(2+). Arg-580 contributes to the CoA binding site. Lys-605 is subject to N6-acetyllysine.

This sequence belongs to the ATP-dependent AMP-binding enzyme family. It depends on Mg(2+) as a cofactor. Acetylated. Deacetylation by the SIR2-homolog deacetylase activates the enzyme.

The catalysed reaction is acetate + ATP + CoA = acetyl-CoA + AMP + diphosphate. Its function is as follows. Catalyzes the conversion of acetate into acetyl-CoA (AcCoA), an essential intermediate at the junction of anabolic and catabolic pathways. AcsA undergoes a two-step reaction. In the first half reaction, AcsA combines acetate with ATP to form acetyl-adenylate (AcAMP) intermediate. In the second half reaction, it can then transfer the acetyl group from AcAMP to the sulfhydryl group of CoA, forming the product AcCoA. This Syntrophus aciditrophicus (strain SB) protein is Acetyl-coenzyme A synthetase.